We begin with the raw amino-acid sequence, 437 residues long: Probable E3 ubiquitin-protein ligase TRIML2 (437 aa).

The segment at 14–55 (TEDAYCETHLEPTRLFCDVDQITLCSKCFQSQEHKHHMVCGI) adopts a B box-type zinc-finger fold. Positions 19, 22, 41, and 47 each coordinate Zn(2+). Residues 55–200 (IQEAAENYRK…IVELEKKCGE (146 aa)) adopt a coiled-coil conformation. The B30.2/SPRY domain maps to 231–429 (DLSLCHIRGL…DSLTILQHGP (199 aa)).

The enzyme catalyses S-ubiquitinyl-[E2 ubiquitin-conjugating enzyme]-L-cysteine + [acceptor protein]-L-lysine = [E2 ubiquitin-conjugating enzyme]-L-cysteine + N(6)-ubiquitinyl-[acceptor protein]-L-lysine.. It functions in the pathway protein modification; protein ubiquitination. This Homo sapiens (Human) protein is Probable E3 ubiquitin-protein ligase TRIML2.